Consider the following 621-residue polypeptide: Ubiquitin carboxyl-terminal hydrolase MINDY-2 (621 aa).

Disordered stretches follow at residues 1–106 and 119–179; these read MESS…RGQY and VGHE…LESF. Residue Ser94 is modified to Phosphoserine. Residues 145–163 are compositionally biased toward low complexity; sequence AAGSEEPSSAGGLSSSCSD. Cys266 serves as the catalytic Nucleophile. The active-site Proton acceptor is His448. The ubiquitin-binding domain (UBD) stretch occupies residues 507–559; sequence GQQDQIDQDYLMALSLQQEQQSQEINWEQIPEGISDLELAKKLQEEEDRRASQ. The disordered stretch occupies residues 556-621; it reads RASQYYQEQE…EKEKNSCVIL (66 aa). The segment covering 558–591 has biased composition (low complexity); that stretch reads SQYYQEQEQAAAAAAAASTQAQQGQPAQASPSSG. The segment covering 597-621 has biased composition (basic and acidic residues); the sequence is SERKRKEPREKDKEKEKEKNSCVIL.

The protein belongs to the MINDY deubiquitinase family. FAM63 subfamily.

It catalyses the reaction Thiol-dependent hydrolysis of ester, thioester, amide, peptide and isopeptide bonds formed by the C-terminal Gly of ubiquitin (a 76-residue protein attached to proteins as an intracellular targeting signal).. Hydrolase that can remove 'Lys-48'-linked conjugated ubiquitin from proteins. Binds to polyubiquitin chains of different linkage types, including 'Lys-6', 'Lys-11', 'Lys-29', 'Lys-33', 'Lys-48' and 'Lys-63'. May play a regulatory role at the level of protein turnover. In Homo sapiens (Human), this protein is Ubiquitin carboxyl-terminal hydrolase MINDY-2.